A 138-amino-acid polypeptide reads, in one-letter code: Large ribosomal subunit protein uL16 (138 aa).

Over residues M1 to T16 the composition is skewed to basic residues. The interval M1 to G23 is disordered.

This sequence belongs to the universal ribosomal protein uL16 family. In terms of assembly, part of the 50S ribosomal subunit.

Functionally, binds 23S rRNA and is also seen to make contacts with the A and possibly P site tRNAs. This is Large ribosomal subunit protein uL16 from Corynebacterium aurimucosum (strain ATCC 700975 / DSM 44827 / CIP 107346 / CN-1) (Corynebacterium nigricans).